Here is a 504-residue protein sequence, read N- to C-terminus: Anaerobic nitric oxide reductase transcription regulator NorR (504 aa).

Residue aspartate 57 is modified to 4-aspartylphosphate. The 230-residue stretch at 187 to 416 (MIGLSPGMTQ…LEHAIHRAVV (230 aa)) folds into the Sigma-54 factor interaction domain. Residues 215–222 (GETGTGKE) and 278–287 (ADNGTLFLDE) contribute to the ATP site. Positions 479 to 498 (WAACARMLETDVANLHRLAK) form a DNA-binding region, H-T-H motif.

Its pathway is nitrogen metabolism; nitric oxide reduction. Functionally, required for the expression of anaerobic nitric oxide (NO) reductase, acts as a transcriptional activator for at least the norVW operon. Activation also requires sigma-54. The protein is Anaerobic nitric oxide reductase transcription regulator NorR of Escherichia coli O17:K52:H18 (strain UMN026 / ExPEC).